Here is a 202-residue protein sequence, read N- to C-terminus: Recombination protein RecR (202 aa).

The C4-type zinc-finger motif lies at 61 to 76; sequence CARCNSFTEDDICATC. In terms of domain architecture, Toprim spans 84-179; that stretch reads SVLCVVETPA…KVTRLARGVP (96 aa).

The protein belongs to the RecR family.

May play a role in DNA repair. It seems to be involved in an RecBC-independent recombinational process of DNA repair. It may act with RecF and RecO. The sequence is that of Recombination protein RecR from Bordetella petrii (strain ATCC BAA-461 / DSM 12804 / CCUG 43448).